A 66-amino-acid polypeptide reads, in one-letter code: Beta-toxin Css6 (66 aa).

Positions 1-66 (KEGYLVNSYT…VWPLPNKTCN (66 aa)) constitute an LCN-type CS-alpha/beta domain. 4 disulfides stabilise this stretch: C12-C65, C16-C41, C25-C46, and C29-C48. At N66 the chain carries Asparagine amide.

Belongs to the long (4 C-C) scorpion toxin superfamily. Sodium channel inhibitor family. Beta subfamily. Expressed by the venom gland.

It is found in the secreted. In terms of biological role, beta toxins bind voltage-independently at site-4 of sodium channels (Nav) and shift the voltage of activation toward more negative potentials thereby affecting sodium channel activation and promoting spontaneous and repetitive firing. The polypeptide is Beta-toxin Css6 (Centruroides suffusus (Durango bark scorpion)).